The primary structure comprises 538 residues: Calcium-dependent protein kinase 8 (538 aa).

A disordered region spans residues Met1–Ala26. A lipid anchor (N-myristoyl glycine) is attached at Gly2. Basic residues predominate over residues Lys16–Lys25. The Protein kinase domain maps to Tyr64 to Leu322. Residues Leu70–Thr78 and Lys93 contribute to the ATP site. Asp188 acts as the Proton acceptor in catalysis. The autoinhibitory domain stretch occupies residues Met328–Ile358. EF-hand domains follow at residues Glu365 to Gln400, Met401 to Ile436, Gly437 to Gly472, and Asn473 to Trp508. Positions 378, 380, 382, 384, 389, 414, 416, 418, 425, 450, 452, 454, 456, 461, 486, 488, 490, 492, and 497 each coordinate Ca(2+).

The protein belongs to the protein kinase superfamily. Ser/Thr protein kinase family. CDPK subfamily.

It is found in the membrane. The catalysed reaction is L-seryl-[protein] + ATP = O-phospho-L-seryl-[protein] + ADP + H(+). It catalyses the reaction L-threonyl-[protein] + ATP = O-phospho-L-threonyl-[protein] + ADP + H(+). Its activity is regulated as follows. Activated by calcium. Autophosphorylation may play an important role in the regulation of the kinase activity. In terms of biological role, may play a role in signal transduction pathways that involve calcium as a second messenger. The sequence is that of Calcium-dependent protein kinase 8 from Oryza sativa subsp. japonica (Rice).